Reading from the N-terminus, the 1550-residue chain is DNA excision repair protein ERCC-6-like 2 (1550 aa).

Residues 1–23 (MDPSAPQPRAETSGKDIWHPGER) are disordered. Basic and acidic residues predominate over residues 12–22 (TSGKDIWHPGE). The region spanning 135–321 (YGHYIHGGGC…WCVMDWAVPG (187 aa)) is the Helicase ATP-binding domain. ATP is bound at residue 148–155 (DDMGLGKT). Positions 272–275 (DEAH) match the DEAH box motif. The region spanning 512 to 662 (VLQQLLNHCR…CVVVGSENAK (151 aa)) is the Helicase C-terminal domain. Positions 785 to 796 (PGQLTLLQCGFS) match the Atypical PIP-box motif. Disordered regions lie at residues 808–848 (DSDG…TSKH), 914–1002 (FPDN…SSLR), and 1354–1410 (AETK…TRTG). Composition is skewed to basic and acidic residues over residues 830 to 840 (EAKDAGCEKNQ) and 933 to 953 (TEHT…DKRN). Residues Ser-980 and Ser-983 each carry the phosphoserine modification. Positions 992–1002 (SRVRKRASSLR) are enriched in basic residues. Polar residues predominate over residues 1359–1388 (SPVSSTQEIDSGKNSQASEDTVTSRSLNSE). Ser-1373 and Ser-1376 each carry phosphoserine. Over residues 1389-1405 (SETRERRLENTMKDQQD) the composition is skewed to basic and acidic residues.

Belongs to the SNF2/RAD54 helicase family. Interacts with NEK6. Interacts (via an atypical PIP-box) with PCNA; this interaction facilitates cenrtomeric localization of ERCC6L2. Interacts with CYREN; this interaction is DNA independent. Interacts with XRCC6 and XRCC5. Post-translationally, phosphorylated by NEK6. In terms of tissue distribution, expressed in bone marrow (at protein level).

It is found in the nucleus. The protein localises to the cytoplasm. It localises to the cytoskeleton. Its subcellular location is the microtubule organizing center. The protein resides in the centrosome. It is found in the mitochondrion. The protein localises to the chromosome. It localises to the centromere. Promotes double-strand break (DSB) end-joining and facilitates programmed recombination by controlling how DNA ends are joined in a spatially oriented manner during repair. Also plays a role in DNA repair by restricting DNA end resection in double strand break (DSB) repair. Facilitates replication of complex DNA regions and regulates the maintenance of chromatin structure. This is DNA excision repair protein ERCC-6-like 2 from Homo sapiens (Human).